Consider the following 530-residue polypeptide: Autoinducer-2 kinase (530 aa).

This sequence belongs to the FGGY kinase family.

The protein localises to the cytoplasm. It carries out the reaction (S)-4,5-dihydroxypentane-2,3-dione + ATP = (2S)-2-hydroxy-3,4-dioxopentyl phosphate + ADP + H(+). In terms of biological role, catalyzes the phosphorylation of autoinducer-2 (AI-2) to phospho-AI-2, which subsequently inactivates the transcriptional regulator LsrR and leads to the transcription of the lsr operon. Phosphorylates the ring-open form of (S)-4,5-dihydroxypentane-2,3-dione (DPD), which is the precursor to all AI-2 signaling molecules, at the C5 position. This chain is Autoinducer-2 kinase, found in Escherichia coli O139:H28 (strain E24377A / ETEC).